Reading from the N-terminus, the 314-residue chain is MKIVLALGGNALQKDSKDKSAEGQLETCRQTAISVADLIEDGHEVSIVHGNGPQVGQILASIELAHQVDNGNPLFPFDVVGAFSEGYIGYHLQNTIREELLKRGIEKSVDTITTQVIVDKNDPGFKNPTKPIGSFYTKEEAEKLEKDKGYTMKEDAGRGYRRVVASPKPVDIVEKEAIKTMVDSGFIVIACGGGGIPVVEDGDRLEGVPAVIDKDFAAEKLAEILDADALLILTAVDRVCVNFNKPDQKALKEINLEEVDKYIEEGQFAPGSMLPKVEACKKFVLSGDKKVAIIASLTNAKAALRGESGTKIVK.

It belongs to the carbamate kinase family. Homodimer.

The protein resides in the cytoplasm. It carries out the reaction hydrogencarbonate + NH4(+) + ATP = carbamoyl phosphate + ADP + H2O + H(+). It participates in metabolic intermediate metabolism; carbamoyl phosphate degradation; CO(2) and NH(3) from carbamoyl phosphate: step 1/1. The protein is Carbamate kinase (arcC) of Clostridium perfringens (strain 13 / Type A).